A 408-amino-acid polypeptide reads, in one-letter code: Acetate kinase (408 aa).

A Mg(2+)-binding site is contributed by Asn-7. An ATP-binding site is contributed by Lys-14. Arg-98 is a substrate binding site. Residue Asp-155 is the Proton donor/acceptor of the active site. Residues 214–218 (HLGNG), 289–291 (DLR), and 337–341 (GVGEN) contribute to the ATP site. A Mg(2+)-binding site is contributed by Glu-390.

This sequence belongs to the acetokinase family. As to quaternary structure, homodimer. The cofactor is Mg(2+). Requires Mn(2+) as cofactor.

It localises to the cytoplasm. It carries out the reaction acetate + ATP = acetyl phosphate + ADP. It participates in metabolic intermediate biosynthesis; acetyl-CoA biosynthesis; acetyl-CoA from acetate: step 1/2. Catalyzes the formation of acetyl phosphate from acetate and ATP. Can also catalyze the reverse reaction. The chain is Acetate kinase from Cyanothece sp. (strain PCC 7425 / ATCC 29141).